The chain runs to 462 residues: MKEPDAIKLFIGQIPRNLDEKDLKPIFEQFGKIYELTVIKDKFTGMHKGCAFLTYCARESALKAQSALHEQKTLPGMNRPIQVKPADSESRGEDRKLFVGMLGKQQTDEDVRRMFETFGNIDECTVLRGPDGTSKGCAFVKFQTHTEAQAAINALHGSRTLPGASSSLVVKFADTEKERGLRRMQQVANQLGMFSPIALQFGAYSAYTQAVSDQLMQQQAALVAAQSAYLNPMATMAAVQMQQMATINPNGIIATPITQINSITSSSGTSTPPTLTATPVSAIPATLGVNGYSAVPTQSTVQPSSEAIYTNGLHPYPAQSPVAQLDPLQQAYAGMQHYTAAYPAAYGLVSPAFTQPPAILTQQPPQQQQQREGPEGCNIFIYHLPQEFTDSEILQMFLPFGNVISAKVFVDRATNQSKCFGFVSFDNPGSAQAAIQSMNGFQIGMKRLKVQLKRPKDANRPY.

RRM domains lie at 7-88, 95-175, and 377-455; these read IKLF…PADS, RKLF…FADT, and CNIF…LKRP.

The protein belongs to the CELF/BRUNOL family.

The protein resides in the nucleus. It localises to the cytoplasm. Its function is as follows. RNA-binding protein that may be involved in the regulation of pre-mRNA alternative splicing. The sequence is that of CUGBP Elav-like family member 3-B (tnrc4-b) from Xenopus laevis (African clawed frog).